Here is an 875-residue protein sequence, read N- to C-terminus: Valine--tRNA ligase (875 aa).

Residues 43–53 (PNVTGVLHMGH) carry the 'HIGH' region motif. The 'KMSKS' region motif lies at 534 to 538 (KMSKS). Position 537 (Lys537) interacts with ATP. A coiled-coil region spans residues 805–875 (GNLINTEEEL…LKESIAALKK (71 aa)).

It belongs to the class-I aminoacyl-tRNA synthetase family. ValS type 1 subfamily. In terms of assembly, monomer.

Its subcellular location is the cytoplasm. The enzyme catalyses tRNA(Val) + L-valine + ATP = L-valyl-tRNA(Val) + AMP + diphosphate. Functionally, catalyzes the attachment of valine to tRNA(Val). As ValRS can inadvertently accommodate and process structurally similar amino acids such as threonine, to avoid such errors, it has a 'posttransfer' editing activity that hydrolyzes mischarged Thr-tRNA(Val) in a tRNA-dependent manner. This is Valine--tRNA ligase from Phocaeicola vulgatus (strain ATCC 8482 / DSM 1447 / JCM 5826 / CCUG 4940 / NBRC 14291 / NCTC 11154) (Bacteroides vulgatus).